The following is a 391-amino-acid chain: Pyruvate dehydrogenase E1 component subunit alpha type II, mitochondrial (391 aa).

Residues 1 to 17 (SNIFKGPTVGSSVVAMS) constitute a mitochondrion transit peptide. Residues H83, Y109, R110, G148, G156, V158, D187, G188, A189, N216, and Y218 each contribute to the pyruvate site. Thiamine diphosphate is bound by residues Y109 and R110. Positions 156, 158, 187, 188, 189, and 216 each coordinate thiamine diphosphate. A Mg(2+)-binding site is contributed by D187. 2 residues coordinate Mg(2+): N216 and Y218. Residue H283 coordinates thiamine diphosphate. Phosphoserine is present on residues S284 and S291.

Heterotetramer of two PDHA2 and two PDHB subunits. The heterotetramer interacts with DLAT, and is part of the multimeric pyruvate dehydrogenase complex that contains multiple copies of pyruvate dehydrogenase (E1), dihydrolipoamide acetyltransferase (DLAT, E2) and lipoamide dehydrogenase (DLD, E3). Thiamine diphosphate is required as a cofactor. The cofactor is Mg(2+).

The protein resides in the mitochondrion matrix. The catalysed reaction is N(6)-[(R)-lipoyl]-L-lysyl-[protein] + pyruvate + H(+) = N(6)-[(R)-S(8)-acetyldihydrolipoyl]-L-lysyl-[protein] + CO2. Pyruvate dehydrogenase activity is inhibited by phosphorylation of PDHA2; it is reactivated by dephosphorylation. Functionally, the pyruvate dehydrogenase complex catalyzes the overall conversion of pyruvate to acetyl-CoA and CO(2), and thereby links the glycolytic pathway to the tricarboxylic cycle. The polypeptide is Pyruvate dehydrogenase E1 component subunit alpha type II, mitochondrial (Ascaris suum (Pig roundworm)).